Here is a 323-residue protein sequence, read N- to C-terminus: Beta-ketoacyl-[acyl-carrier-protein] synthase III (323 aa).

Catalysis depends on residues C113 and H250. The interval Q251–R255 is ACP-binding. N280 is a catalytic residue.

It belongs to the thiolase-like superfamily. FabH family. As to quaternary structure, homodimer.

It is found in the cytoplasm. It catalyses the reaction malonyl-[ACP] + acetyl-CoA + H(+) = 3-oxobutanoyl-[ACP] + CO2 + CoA. Its pathway is lipid metabolism; fatty acid biosynthesis. In terms of biological role, catalyzes the condensation reaction of fatty acid synthesis by the addition to an acyl acceptor of two carbons from malonyl-ACP. Catalyzes the first condensation reaction which initiates fatty acid synthesis and may therefore play a role in governing the total rate of fatty acid production. Possesses both acetoacetyl-ACP synthase and acetyl transacylase activities. Its substrate specificity determines the biosynthesis of branched-chain and/or straight-chain of fatty acids. This chain is Beta-ketoacyl-[acyl-carrier-protein] synthase III, found in Rhizobium meliloti (strain 1021) (Ensifer meliloti).